The following is a 478-amino-acid chain: Probable cytosolic Fe-S cluster assembly factor AGAP009023 (478 aa).

Positions 23, 69, 72, 75, 189, 245, 396, and 400 each coordinate [4Fe-4S] cluster.

This sequence belongs to the NARF family.

Its function is as follows. Component of the cytosolic iron-sulfur (Fe/S) protein assembly machinery. Required for maturation of extramitochondrial Fe/S proteins. This is Probable cytosolic Fe-S cluster assembly factor AGAP009023 from Anopheles gambiae (African malaria mosquito).